We begin with the raw amino-acid sequence, 131 residues long: Conotoxin Cal8.1 (131 aa).

A signal peptide spans 1 to 19; sequence MKLLLTLLLGSALMCITLA. Residues 20-38 constitute a propeptide that is removed on maturation; it reads DECGLGTHRPVKEVIDNVR.

Post-translationally, contains 4 disulfide bonds. As to expression, expressed by the venom duct.

It localises to the secreted. Its function is as follows. Probable neurotoxin with unknown target. Possibly targets ion channels. This chain is Conotoxin Cal8.1, found in Californiconus californicus (California cone).